The sequence spans 373 residues: RNA cytidine acetyltransferase (373 aa).

Arg-53 provides a ligand contact to ATP. Acetyl-CoA is bound by residues Ile-216–Thr-218 and Thr-223–Ser-229. The disordered stretch occupies residues Gly-246–Glu-271. Residue Arg-313 participates in acetyl-CoA binding.

It belongs to the RNA cytidine acetyltransferase family. NAT10 subfamily.

It is found in the nucleus. The protein localises to the nucleolus. It catalyses the reaction a cytidine in 18S rRNA + acetyl-CoA + ATP + H2O = an N(4)-acetylcytidine in 18S rRNA + ADP + phosphate + CoA + H(+). The enzyme catalyses a cytidine in tRNA + acetyl-CoA + ATP + H2O = an N(4)-acetylcytidine in tRNA + ADP + phosphate + CoA + H(+). In terms of biological role, RNA cytidine acetyltransferase with specificity toward both 18S rRNA and tRNAs. Catalyzes the formation of N(4)-acetylcytidine (ac4C) in 18S rRNA. Required for early nucleolar cleavages of precursor rRNA at sites A0, A1 and A2 during 18S rRNA synthesis. Catalyzes the formation of ac4C in serine and leucine tRNAs. Requires a tRNA-binding adapter protein for full tRNA acetyltransferase activity but not for 18S rRNA acetylation. The sequence is that of RNA cytidine acetyltransferase from Achlya ambisexualis (Water mold).